A 285-amino-acid polypeptide reads, in one-letter code: Ribosomal RNA small subunit methyltransferase A (285 aa).

Residues Asn11, Leu13, Gly37, Glu57, Asp85, and Asn105 each coordinate S-adenosyl-L-methionine.

The protein belongs to the class I-like SAM-binding methyltransferase superfamily. rRNA adenine N(6)-methyltransferase family. RsmA subfamily.

It is found in the cytoplasm. It catalyses the reaction adenosine(1518)/adenosine(1519) in 16S rRNA + 4 S-adenosyl-L-methionine = N(6)-dimethyladenosine(1518)/N(6)-dimethyladenosine(1519) in 16S rRNA + 4 S-adenosyl-L-homocysteine + 4 H(+). Functionally, specifically dimethylates two adjacent adenosines (A1518 and A1519) in the loop of a conserved hairpin near the 3'-end of 16S rRNA in the 30S particle. May play a critical role in biogenesis of 30S subunits. This Campylobacter curvus (strain 525.92) protein is Ribosomal RNA small subunit methyltransferase A.